The chain runs to 290 residues: UPF0761 membrane protein YihY (290 aa).

Transmembrane regions (helical) follow at residues 44-64, 104-124, 140-160, 183-203, 210-230, and 244-264; these read LLSL…FPMF, VGAC…DSAL, FAVY…SLAI, IFPL…VPTI, AIVG…GFAL, and VLAV…IVLL.

Belongs to the UPF0761 family.

It is found in the cell inner membrane. The chain is UPF0761 membrane protein YihY from Escherichia coli O7:K1 (strain IAI39 / ExPEC).